The chain runs to 431 residues: Adenylosuccinate synthetase (431 aa).

GTP is bound by residues 12 to 18 (GDEGKGK) and 40 to 42 (GHS). D13 serves as the catalytic Proton acceptor. Mg(2+) contacts are provided by D13 and G40. IMP is bound by residues 13–16 (DEGK) and 38–41 (NAGH). H41 (proton donor) is an active-site residue. A disordered region spans residues 114-133 (QQQERDRSKNGEKIGTTNKG). The span at 115–125 (QQERDRSKNGE) shows a compositional bias: basic and acidic residues. 5 residues coordinate IMP: T130, R144, Q225, T240, and R304. Substrate is bound at residue 300-306 (TVTKRPR). GTP is bound by residues R306, 332 to 334 (CLD), and 414 to 416 (SIG).

This sequence belongs to the adenylosuccinate synthetase family. In terms of assembly, homodimer. Mg(2+) serves as cofactor.

It localises to the cytoplasm. The enzyme catalyses IMP + L-aspartate + GTP = N(6)-(1,2-dicarboxyethyl)-AMP + GDP + phosphate + 2 H(+). It participates in purine metabolism; AMP biosynthesis via de novo pathway; AMP from IMP: step 1/2. Its function is as follows. Plays an important role in the de novo pathway of purine nucleotide biosynthesis. Catalyzes the first committed step in the biosynthesis of AMP from IMP. This is Adenylosuccinate synthetase from Pediococcus pentosaceus (strain ATCC 25745 / CCUG 21536 / LMG 10740 / 183-1w).